Here is a 396-residue protein sequence, read N- to C-terminus: NADH-quinone oxidoreductase subunit D (396 aa).

It belongs to the complex I 49 kDa subunit family. NDH-1 is composed of 14 different subunits. Subunits NuoB, C, D, E, F, and G constitute the peripheral sector of the complex.

It is found in the cell inner membrane. It catalyses the reaction a quinone + NADH + 5 H(+)(in) = a quinol + NAD(+) + 4 H(+)(out). NDH-1 shuttles electrons from NADH, via FMN and iron-sulfur (Fe-S) centers, to quinones in the respiratory chain. The immediate electron acceptor for the enzyme in this species is believed to be ubiquinone. Couples the redox reaction to proton translocation (for every two electrons transferred, four hydrogen ions are translocated across the cytoplasmic membrane), and thus conserves the redox energy in a proton gradient. This is NADH-quinone oxidoreductase subunit D from Bartonella tribocorum (strain CIP 105476 / IBS 506).